We begin with the raw amino-acid sequence, 101 residues long: Small ribosomal subunit protein uS14 (101 aa).

This sequence belongs to the universal ribosomal protein uS14 family. As to quaternary structure, part of the 30S ribosomal subunit. Contacts proteins S3 and S10.

Binds 16S rRNA, required for the assembly of 30S particles and may also be responsible for determining the conformation of the 16S rRNA at the A site. This is Small ribosomal subunit protein uS14 from Chlamydia muridarum (strain MoPn / Nigg).